The chain runs to 387 residues: Na(+)/H(+) antiporter NhaA (387 aa).

12 consecutive transmembrane segments (helical) span residues 16–36 (AGGV…NSSI), 53–73 (IEHY…GLEL), 89–109 (LLPI…HMFF), 118–138 (GSGI…SLLG), 147–167 (VFLT…IAIF), 171–191 (GIDV…FILN), 197–217 (ILWP…HSGV), 220–240 (TITG…PDSI), 251–271 (PVAF…IIDS), 283–303 (IGIF…FCAI), 321–341 (VIGV…ITLL), and 354–374 (IAIM…LKMT).

This sequence belongs to the NhaA Na(+)/H(+) (TC 2.A.33) antiporter family.

It is found in the cell inner membrane. It catalyses the reaction Na(+)(in) + 2 H(+)(out) = Na(+)(out) + 2 H(+)(in). Its function is as follows. Na(+)/H(+) antiporter that extrudes sodium in exchange for external protons. The protein is Na(+)/H(+) antiporter NhaA of Cytophaga hutchinsonii (strain ATCC 33406 / DSM 1761 / CIP 103989 / NBRC 15051 / NCIMB 9469 / D465).